A 303-amino-acid chain; its full sequence is Trans-aconitate 2-methyltransferase (303 aa).

Positions 271–303 (EGSGGSGGSGGSAGSAGCAGSGGSVGPAGEAGR) are disordered. Over residues 272–303 (GSGGSGGSGGSAGSAGCAGSGGSVGPAGEAGR) the composition is skewed to gly residues.

The protein belongs to the methyltransferase superfamily. Tam family.

It localises to the cytoplasm. It carries out the reaction trans-aconitate + S-adenosyl-L-methionine = (E)-3-(methoxycarbonyl)pent-2-enedioate + S-adenosyl-L-homocysteine. Its function is as follows. Catalyzes the S-adenosylmethionine monomethyl esterification of trans-aconitate. The protein is Trans-aconitate 2-methyltransferase of Streptomyces coelicolor (strain ATCC BAA-471 / A3(2) / M145).